We begin with the raw amino-acid sequence, 491 residues long: Cytochrome P450 2H1 (491 aa).

Residue Cys436 participates in heme binding.

Belongs to the cytochrome P450 family. It depends on heme as a cofactor. As to expression, expressed in liver.

It is found in the endoplasmic reticulum membrane. Its subcellular location is the microsome membrane. The catalysed reaction is an organic molecule + reduced [NADPH--hemoprotein reductase] + O2 = an alcohol + oxidized [NADPH--hemoprotein reductase] + H2O + H(+). In terms of biological role, cytochromes P450 are a group of heme-thiolate monooxygenases. In liver microsomes, this enzyme is involved in an NADPH-dependent electron transport pathway. It oxidizes a variety of structurally unrelated compounds, including steroids, fatty acids, and xenobiotics. The chain is Cytochrome P450 2H1 (CYP2H1) from Gallus gallus (Chicken).